The sequence spans 908 residues: 26S proteasome non-ATPase regulatory subunit 2 (908 aa).

Met-1 carries the post-translational modification N-acetylmethionine. A disordered region spans residues 1–51; sequence MEEGGRDKTPVQSQQPSATAPSGADEKSSGKERRDAGEKDKEQELSEEDKQ. Residue Thr-9 is modified to Phosphothreonine. Over residues 10–20 the composition is skewed to polar residues; the sequence is PVQSQQPSATA. The segment covering 24 to 51 has biased composition (basic and acidic residues); it reads ADEKSSGKERRDAGEKDKEQELSEEDKQ. Ser-29 and Ser-147 each carry phosphoserine. At Tyr-194 the chain carries Phosphotyrosine. Phosphoserine is present on residues Ser-361 and Ser-363. 5 PC repeats span residues 409–442, 443–479, 480–514, 517–551, and 560–589; these read SAAA…YIKS, GALL…TMRL, GSIF…SMEV, VTAL…TELK, and LGLG…PFRS. At Lys-551 the chain carries N6-acetyllysine. Positions 623–643 are enriched in basic and acidic residues; that stretch reads KEKEEDKDKKEKKDKDKKEAP. Residues 623–645 form a disordered region; that stretch reads KEKEEDKDKKEKKDKDKKEAPAD. 2 PC repeats span residues 692–723 and 742–757; these read LALA…EVSY and AAML…KDPN. Residues 708–903 are required for interaction with UBLCP1; the sequence is DTLSKFSHDA…LEGFVILRKN (196 aa).

Belongs to the proteasome subunit S2 family. Component of the 19S proteasome regulatory particle complex. The 26S proteasome consists of a 20S core particle (CP) and two 19S regulatory subunits (RP). The regulatory particle is made of a lid composed of 9 subunits, a base containing 6 ATPases and few additional components including PSMD2. Interacts with RPGRIP1L. Interacts with CRY1 in a KDM8-dependent manner. Interacts (via C-terminus) with phosphatase UBLCP1 (via ubiquitin-like domain); the interaction recruits UBLCP1 to the 19S regulatory particle where it dephosphorylates 19S subunit PSMC2/RPT1 which impairs PSMC2 ATPase activity and disrupts 26S proteasome assembly.

Component of the 26S proteasome, a multiprotein complex involved in the ATP-dependent degradation of ubiquitinated proteins. This complex plays a key role in the maintenance of protein homeostasis by removing misfolded or damaged proteins, which could impair cellular functions, and by removing proteins whose functions are no longer required. Therefore, the proteasome participates in numerous cellular processes, including cell cycle progression, apoptosis, or DNA damage repair. Functionally, binds to the intracellular domain of tumor necrosis factor type 1 receptor. The binding domain of TRAP1 and TRAP2 resides outside the death domain of TNFR1. The sequence is that of 26S proteasome non-ATPase regulatory subunit 2 (Psmd2) from Rattus norvegicus (Rat).